The sequence spans 255 residues: D-aminoacyl-tRNA deacylase (255 aa).

This sequence belongs to the DtdA deacylase family. Monomer. The cofactor is Zn(2+).

The catalysed reaction is a D-aminoacyl-tRNA + H2O = a tRNA + a D-alpha-amino acid + H(+). It catalyses the reaction glycyl-tRNA(Ala) + H2O = tRNA(Ala) + glycine + H(+). D-aminoacyl-tRNA deacylase with broad substrate specificity. By recycling D-aminoacyl-tRNA to D-amino acids and free tRNA molecules, this enzyme counteracts the toxicity associated with the formation of D-aminoacyl-tRNA entities in vivo. This chain is D-aminoacyl-tRNA deacylase, found in Methanocaldococcus jannaschii (strain ATCC 43067 / DSM 2661 / JAL-1 / JCM 10045 / NBRC 100440) (Methanococcus jannaschii).